The following is a 390-amino-acid chain: Cathepsin D (390 aa).

The propeptide at 1–44 (VIRIPLHKFTSIRRTMSEAAGXVXXLIAKGPISKYATGEPAVRQ) is activation peptide. Residues 59–385 (YYGEIGIGTP…DRDQNRVGLA (327 aa)) enclose the Peptidase A1 domain. 2 cysteine pairs are disulfide-bonded: cysteine 71–cysteine 140 and cysteine 90–cysteine 97. Residue aspartate 77 is part of the active site. Asparagine 114 and asparagine 241 each carry an N-linked (GlcNAc...) asparagine glycan. Residues cysteine 264 and cysteine 268 are joined by a disulfide bond. The active site involves aspartate 273. A disulfide bridge links cysteine 307 with cysteine 344.

The protein belongs to the peptidase A1 family. As to quaternary structure, consists of a light chain and a heavy chain. Interacts with ADAM30; this leads to activation of CTSD. Interacts with GRN; stabilizes CTSD; increases its proteolytic activity. Post-translationally, N- and O-glycosylated. Undergoes proteolytic cleavage and activation by ADAM30.

Its subcellular location is the lysosome. The protein resides in the melanosome. The protein localises to the secreted. It localises to the extracellular space. The catalysed reaction is Specificity similar to, but narrower than, that of pepsin A. Does not cleave the 4-Gln-|-His-5 bond in B chain of insulin.. In terms of biological role, acid protease active in intracellular protein breakdown. Plays a role in APP processing following cleavage and activation by ADAM30 which leads to APP degradation. The chain is Cathepsin D (CTSD) from Bos taurus (Bovine).